Consider the following 372-residue polypeptide: Glutamate 5-kinase (372 aa).

Residue lysine 14 coordinates ATP. The substrate site is built by serine 54, aspartate 141, and asparagine 153. 173–174 (TD) serves as a coordination point for ATP. The region spanning 280–358 (RGHVVIDAGA…GEIETVLGYM (79 aa)) is the PUA domain.

It belongs to the glutamate 5-kinase family.

The protein localises to the cytoplasm. The enzyme catalyses L-glutamate + ATP = L-glutamyl 5-phosphate + ADP. It participates in amino-acid biosynthesis; L-proline biosynthesis; L-glutamate 5-semialdehyde from L-glutamate: step 1/2. In terms of biological role, catalyzes the transfer of a phosphate group to glutamate to form L-glutamate 5-phosphate. The chain is Glutamate 5-kinase from Burkholderia mallei (strain NCTC 10229).